A 1009-amino-acid chain; its full sequence is MEQVPSTGRLVQITVTEGYDLKGFKGDTPVTFIRAEFNQVVLGDSAKITVSPEGSAKYNFTSSFEFNPEGGITLDDLAHKPVFLTVTEVLPKEKKQKEEKTLILGQAVVDLLPLLEGQSSFQTTVPLHPVQGSPLETPRSSAKQCSLEVKVLVAEPLLTTAQISGGNLLKVTLEAAYSVPESFIPTGPGQNYMVGLQVPSLGEKDYPILFKNGTLKLGGEREPVPRPKKWPIANILAPGANNIPDAFIVGGPYEEEEGELNHPEDSEFRNQAECIKKRIIWDLESRCYLDPSAVVSFQKRIADCRLWPVEITRVPLVTVPKGKAGKTEKTDEEGQLSFHGVAYVNMVPLLYPGVKRIRGAFHVYPYLDSVVHEKTKCLLSLFRDIGHHLIHNNKIGGINSLLSKQAVSKNLKEDKPVKEKDIDGRPRPGDVQAPSIKSQSSDTPLEGEPPLSHNPEGQQYVEAGTYIVLEIQLDKALVPKRMPEELARRVKEMIPPRPPLTRRTGGAQKAVSDYHTQIKNISRAILDEYYRMFGKQVAKLESDMDSETLEEQKCQLSYELNCSGKYFAFKEQLKHAVVKIVREKYLKTTSFESQEELQTFISELYVFLVDQMHVALNQTMPDDVQGTIATIFTSSEQLRLFAFEAEVNENFEMAAAYYKERLVREPQNLDHWLDYGVFCLLTEDNIKAQECFRKALSLNQSHIHSLLLCGVLAVLLENYEQAEIFFEDATCLEPTNVVAWTLLGLYYEIQNNDIRMEMAFHEASKQLQAQMLQAQVTKQKSAGVVEDVEERGKRESSLGPWGITNGSATAIKVEAPAGPGAALSILDKFLEESSKLQSDSQEPILTTQTWDPSINQKPSNTFIKEIPTKKEACYERTISFVVDASEMHFIFLRLGLIYLEEKEYEKAKKTYMQACKRSPSCLTWLGLGIACYRLEELTEAEDALSEANALNNYNAEVWAYLALVCLKVGRQLEAEQAYKYMIKLKLKDEALLAEIHTLQETVGFGNPSF.

Basic and acidic residues predominate over residues 410–428 (NLKEDKPVKEKDIDGRPRP). The tract at residues 410–457 (NLKEDKPVKEKDIDGRPRPGDVQAPSIKSQSSDTPLEGEPPLSHNPEG) is disordered. 7 TPR repeats span residues 498–531 (PPLT…EYYR), 635–668 (SEQL…EPQN), 669–702 (LDHW…NQSH), 704–736 (HSLL…EPTN), 888–921 (HFIF…SPSC), 923–954 (TWLG…NNYN), and 956–988 (EVWA…KLKD).

Belongs to the CFAP70 family.

It localises to the cell projection. Its subcellular location is the cilium. The protein localises to the flagellum. It is found in the cytoplasm. The protein resides in the cytoskeleton. It localises to the flagellum basal body. Its subcellular location is the cilium axoneme. Axoneme-binding protein that plays a role in the regulation of ciliary motility and cilium length. This chain is Cilia- and flagella-associated protein 70, found in Macaca fascicularis (Crab-eating macaque).